Consider the following 281-residue polypeptide: DegV domain-containing protein spr0652 (281 aa).

Positions 3-280 (WKIIADSGCD…EGGLLMGYEI (278 aa)) constitute a DegV domain. Hexadecanoate contacts are provided by S63 and S91.

May bind long-chain fatty acids, such as palmitate, and may play a role in lipid transport or fatty acid metabolism. The polypeptide is DegV domain-containing protein spr0652 (Streptococcus pneumoniae (strain ATCC BAA-255 / R6)).